Reading from the N-terminus, the 198-residue chain is Large ribosomal subunit protein bL21 (198 aa).

It belongs to the bacterial ribosomal protein bL21 family. In terms of assembly, part of the 50S ribosomal subunit. Contacts protein L20.

Functionally, this protein binds to 23S rRNA in the presence of protein L20. This chain is Large ribosomal subunit protein bL21, found in Ruegeria sp. (strain TM1040) (Silicibacter sp.).